Here is a 660-residue protein sequence, read N- to C-terminus: Bifunctional polymyxin resistance protein ArnA (660 aa).

Positions 1–304 (MKAIVFAYHD…EMGIVTDVRL (304 aa)) are formyltransferase ArnAFT. The active-site Proton donor; for formyltransferase activity is the H104. (6R)-10-formyltetrahydrofolate is bound by residues R114 and 136 to 140 (VKRPD). Positions 314–660 (RRTRVLILGV…RTTVQEGDGA (347 aa)) are dehydrogenase ArnADH. NAD(+) contacts are provided by residues D347 and 368 to 369 (DI). Residues A393, Y398, and 432 to 433 (TS) contribute to the UDP-alpha-D-glucuronate site. E434 acts as the Proton acceptor; for decarboxylase activity in catalysis. UDP-alpha-D-glucuronate is bound by residues R460, N492, 526 to 535 (KLMDGGAQKR), and Y613. The Proton donor; for decarboxylase activity role is filled by R619.

This sequence in the N-terminal section; belongs to the Fmt family. UDP-L-Ara4N formyltransferase subfamily. In the C-terminal section; belongs to the NAD(P)-dependent epimerase/dehydratase family. UDP-glucuronic acid decarboxylase subfamily. In terms of assembly, homohexamer, formed by a dimer of trimers.

It catalyses the reaction UDP-alpha-D-glucuronate + NAD(+) = UDP-beta-L-threo-pentopyranos-4-ulose + CO2 + NADH. The enzyme catalyses UDP-4-amino-4-deoxy-beta-L-arabinose + (6R)-10-formyltetrahydrofolate = UDP-4-deoxy-4-formamido-beta-L-arabinose + (6S)-5,6,7,8-tetrahydrofolate + H(+). Its pathway is nucleotide-sugar biosynthesis; UDP-4-deoxy-4-formamido-beta-L-arabinose biosynthesis; UDP-4-deoxy-4-formamido-beta-L-arabinose from UDP-alpha-D-glucuronate: step 1/3. It functions in the pathway nucleotide-sugar biosynthesis; UDP-4-deoxy-4-formamido-beta-L-arabinose biosynthesis; UDP-4-deoxy-4-formamido-beta-L-arabinose from UDP-alpha-D-glucuronate: step 3/3. It participates in bacterial outer membrane biogenesis; lipopolysaccharide biosynthesis. Bifunctional enzyme that catalyzes the oxidative decarboxylation of UDP-glucuronic acid (UDP-GlcUA) to UDP-4-keto-arabinose (UDP-Ara4O) and the addition of a formyl group to UDP-4-amino-4-deoxy-L-arabinose (UDP-L-Ara4N) to form UDP-L-4-formamido-arabinose (UDP-L-Ara4FN). The modified arabinose is attached to lipid A and is required for resistance to polymyxin and cationic antimicrobial peptides. This is Bifunctional polymyxin resistance protein ArnA from Serratia proteamaculans (strain 568).